We begin with the raw amino-acid sequence, 699 residues long: Elongation factor G (699 aa).

Positions glutamate 8–valine 288 constitute a tr-type G domain. GTP is bound by residues alanine 17–threonine 24, aspartate 86–histidine 90, and asparagine 140–aspartate 143.

Belongs to the TRAFAC class translation factor GTPase superfamily. Classic translation factor GTPase family. EF-G/EF-2 subfamily.

The protein localises to the cytoplasm. In terms of biological role, catalyzes the GTP-dependent ribosomal translocation step during translation elongation. During this step, the ribosome changes from the pre-translocational (PRE) to the post-translocational (POST) state as the newly formed A-site-bound peptidyl-tRNA and P-site-bound deacylated tRNA move to the P and E sites, respectively. Catalyzes the coordinated movement of the two tRNA molecules, the mRNA and conformational changes in the ribosome. The chain is Elongation factor G from Sinorhizobium medicae (strain WSM419) (Ensifer medicae).